Reading from the N-terminus, the 387-residue chain is MACLRKLKEDIQVLEKLFPKNHNRFQILSASVDELSMKFINAENKGIIVTANIQENYPRQPPIWFSESDDVPVIGMSLQRLTETEESTNILHQVHRLVSDLCSFYNLQMPCELPQIAPPVRDDIDEGRGSDISDTTSEPIDDDMAGDGEVDDDDEEEEDDEDADGDIEIVEMAEEDPTSQHDVGVSKEGLDMLDKVSKINRQQHLDGKVQGSITATDRLMKEIRDIHRSEHFKNGIYTFELEKEENLYQWWIKLHKVDEDSPLFEDMKKLKKDHNQDHLLFSFTFNEKFPCDPPFVRVVAPHINQGFVLGGGAICMELLTKQGWSSAYSIESCILQIAATLVKGRARISFDAKHTSTYSMARAQQSFKSLQQIHAKSGWYTPPKTEG.

Residues 117–164 form a disordered region; that stretch reads APPVRDDIDEGRGSDISDTTSEPIDDDMAGDGEVDDDDEEEEDDEDAD. Residues 120-131 are compositionally biased toward basic and acidic residues; that stretch reads VRDDIDEGRGSD. Positions 139-164 are enriched in acidic residues; it reads PIDDDMAGDGEVDDDDEEEEDDEDAD. One can recognise a UBC core domain in the interval 214–380; sequence TATDRLMKEI…QQIHAKSGWY (167 aa). Catalysis depends on Cys315, which acts as the Glycyl thioester intermediate.

It belongs to the ubiquitin-conjugating enzyme family. In the embryo, expressed in precursor neuron and muscle cells and in other cells such as hypodermal cells. After hatching of L1 larvae and in all subsequent stages, strongest expression in pharyngeal muscle and anal muscle cells. In L4 larvae and adolescent hermaphrodites, also expressed in the vulval muscles. Expression also detected in all four nerve cords and in neurons with weaker levels in all body wall muscles.

The protein resides in the cytoplasm. It localises to the nucleus. The enzyme catalyses S-ubiquitinyl-[E1 ubiquitin-activating enzyme]-L-cysteine + [E2 ubiquitin-conjugating enzyme]-L-cysteine = [E1 ubiquitin-activating enzyme]-L-cysteine + S-ubiquitinyl-[E2 ubiquitin-conjugating enzyme]-L-cysteine.. It participates in protein modification; protein ubiquitination. Functionally, catalyzes the covalent attachment of ubiquitin to other proteins (Potential). Required for the maintenance of neuromuscular function. The protein is Ubiquitin-conjugating enzyme E2 25 of Caenorhabditis elegans.